Here is a 228-residue protein sequence, read N- to C-terminus: Non-fluorescent flavoprotein (228 aa).

It belongs to the bacterial luciferase oxidoreductase family. As to quaternary structure, homodimer. Requires FMN as cofactor.

This is Non-fluorescent flavoprotein (luxF) from Photobacterium leiognathi.